We begin with the raw amino-acid sequence, 462 residues long: MLKIYNSLTRQKEEFKPITEGKVGMYVCGVTIYDLCHIGHGRTFVSFDVISRYLRFLGYDLTFVRNITDIDDKIIKRAAENNESCEALTERLIAEMHADFDALKMKRPDVEPRATEYITEIVELVERLIERGFAYVASNGDVMFEVKKFDEYGRLSRQDLEQLQAGSRVTLEETSVKRSGMDFVLWKMSKPGEPTWESPWGPGRPGWHIECSAMNSSILGNHFDIHGGGSDLMFPHHENEIAQSCCAHDAKYVNTWMHSGMVMIDREKMSKSLGNFFTIRDVLAHYDSETVRYFLMSGHYRSQLNYSEENLNQARSSLERLYTSLRGLDLTVTPAGGETFVTRFSTAMNDDFNTPEAYSVLFEMAREVNRLKTENIEAASKLGALMRELAEVLGLLSQEPEAFLQGDSGSDNEVAEIEALIKARNDARAAKDWSAADAARDAITALNIVLEDGPEGTTWRRK.

C28 is a Zn(2+) binding site. Residues 30 to 40 (VTIYDLCHIGH) carry the 'HIGH' region motif. The Zn(2+) site is built by C211, H236, and E240. The 'KMSKS' region signature appears at 268-272 (KMSKS). K271 contacts ATP.

Belongs to the class-I aminoacyl-tRNA synthetase family. Monomer. Zn(2+) is required as a cofactor.

It localises to the cytoplasm. It catalyses the reaction tRNA(Cys) + L-cysteine + ATP = L-cysteinyl-tRNA(Cys) + AMP + diphosphate. This Aliivibrio salmonicida (strain LFI1238) (Vibrio salmonicida (strain LFI1238)) protein is Cysteine--tRNA ligase.